Reading from the N-terminus, the 157-residue chain is MAEEQQPRILLEVRKLYVGDLSVEVPNAPEVFQQSLNPEISLGINHENKKLKEENYYSVHLRLTVTAKDSTSSSVIYLVEATQTGIFEIVGLDESQLQHALNVYCTTVLYPYAREVISSAITHAGFPSLYLQPINFDALYQQQLQQEQNTTAQGGEA.

This sequence belongs to the SecB family. Homotetramer, a dimer of dimers. One homotetramer interacts with 1 SecA dimer.

The protein localises to the cytoplasm. Functionally, one of the proteins required for the normal export of preproteins out of the cell cytoplasm. It is a molecular chaperone that binds to a subset of precursor proteins, maintaining them in a translocation-competent state. It also specifically binds to its receptor SecA. The chain is Protein-export protein SecB from Dichelobacter nodosus (strain VCS1703A).